Reading from the N-terminus, the 196-residue chain is Nucleoside triphosphate pyrophosphatase (196 aa).

Asp73 (proton acceptor) is an active-site residue.

Belongs to the Maf family. The cofactor is a divalent metal cation.

It is found in the cytoplasm. The catalysed reaction is a ribonucleoside 5'-triphosphate + H2O = a ribonucleoside 5'-phosphate + diphosphate + H(+). It carries out the reaction a 2'-deoxyribonucleoside 5'-triphosphate + H2O = a 2'-deoxyribonucleoside 5'-phosphate + diphosphate + H(+). In terms of biological role, nucleoside triphosphate pyrophosphatase. May have a dual role in cell division arrest and in preventing the incorporation of modified nucleotides into cellular nucleic acids. This is Nucleoside triphosphate pyrophosphatase from Maricaulis maris (strain MCS10) (Caulobacter maris).